Consider the following 176-residue polypeptide: Lipocalin-1 (176 aa).

Residues 1–19 (MMRALLLAIGLGLVAALQA) form the signal peptide. Cys-80 and Cys-171 form a disulfide bridge.

It belongs to the calycin superfamily. Lipocalin family. Predominantly monomer. May form homodimer. Interacts with LMBR1L; this interaction mediates the endocytosis of LCN1.

The protein localises to the secreted. Its function is as follows. Could play a role in taste reception. Could be necessary for the concentration and delivery of sapid molecules in the gustatory system. Can bind various ligands, with chemical structures ranging from lipids and retinoids to the macrocyclic antibiotic rifampicin and even to microbial siderophores. Exhibits an extremely wide ligand pocket. The sequence is that of Lipocalin-1 (LCN1) from Sus scrofa (Pig).